A 99-amino-acid polypeptide reads, in one-letter code: A-type ATP synthase subunit F (99 aa).

Belongs to the V-ATPase F subunit family. Has multiple subunits with at least A(3), B(3), C, D, E, F, H, I and proteolipid K(x).

It is found in the cell membrane. Its function is as follows. Component of the A-type ATP synthase that produces ATP from ADP in the presence of a proton gradient across the membrane. The sequence is that of A-type ATP synthase subunit F from Methanococcus maripaludis (strain C5 / ATCC BAA-1333).